The chain runs to 443 residues: Probable D-serine dehydratase (443 aa).

An N6-(pyridoxal phosphate)lysine modification is found at Lys118.

This sequence belongs to the serine/threonine dehydratase family. DsdA subfamily. Requires pyridoxal 5'-phosphate as cofactor.

It catalyses the reaction D-serine = pyruvate + NH4(+). The protein is Probable D-serine dehydratase of Aeromonas salmonicida (strain A449).